The chain runs to 409 residues: Transcriptional regulator GME11370 (409 aa).

The segment at residues 17–44 (CHACAASKLKCSKEKPSCARCLKRNKPC) is a DNA-binding region (zn(2)-C6 fungal-type). The segment at 49–83 (TRRAGRHHGSRSKKVPTISPASAPEPQPFSTTPPD) is disordered. Positions 51–62 (RAGRHHGSRSKK) are enriched in basic residues.

It localises to the nucleus. Its function is as follows. Transcriptional regulator; part of the gene cluster that mediates the biosynthesis of dibenzodioxocinones such as pestalotiollide B, a novel class of inhibitors against cholesterol ester transfer protein (CEPT). The chain is Transcriptional regulator GME11370 from Pestalotiopsis microspora.